A 193-amino-acid chain; its full sequence is DNA damage-inducible transcript 4-like protein (193 aa).

The protein belongs to the DDIT4 family. In terms of tissue distribution, up-regulated in atherosclerotic plaques relative to healthy segments of the same artery.

The protein resides in the cytoplasm. Inhibits cell growth by regulating the TOR signaling pathway upstream of the TSC1-TSC2 complex and downstream of AKT1. The sequence is that of DNA damage-inducible transcript 4-like protein (DDIT4L) from Homo sapiens (Human).